The primary structure comprises 409 residues: Peptidase T (409 aa).

Histidine 78 provides a ligand contact to Zn(2+). Aspartate 80 is a catalytic residue. Aspartate 140 is a binding site for Zn(2+). Glutamate 174 acts as the Proton acceptor in catalysis. Glutamate 175, aspartate 197, and histidine 379 together coordinate Zn(2+).

This sequence belongs to the peptidase M20B family. Zn(2+) serves as cofactor.

The protein localises to the cytoplasm. The catalysed reaction is Release of the N-terminal residue from a tripeptide.. In terms of biological role, cleaves the N-terminal amino acid of tripeptides. The sequence is that of Peptidase T from Aliivibrio fischeri (strain ATCC 700601 / ES114) (Vibrio fischeri).